Here is a 338-residue protein sequence, read N- to C-terminus: Aspartate-semialdehyde dehydrogenase (338 aa).

NADP(+) is bound by residues 13 to 16 (TGNV) and 41 to 42 (SS). Arg-101 lines the phosphate pocket. Cys-132 (acyl-thioester intermediate) is an active-site residue. Gln-159 serves as a coordination point for substrate. NADP(+) is bound by residues 162-163 (SG) and Pro-187. Lys-216 serves as a coordination point for phosphate. Arg-237 contributes to the substrate binding site. His-244 acts as the Proton acceptor in catalysis. An NADP(+)-binding site is contributed by Asn-317.

It belongs to the aspartate-semialdehyde dehydrogenase family. As to quaternary structure, homodimer.

It catalyses the reaction L-aspartate 4-semialdehyde + phosphate + NADP(+) = 4-phospho-L-aspartate + NADPH + H(+). The protein operates within amino-acid biosynthesis; L-lysine biosynthesis via DAP pathway; (S)-tetrahydrodipicolinate from L-aspartate: step 2/4. It participates in amino-acid biosynthesis; L-methionine biosynthesis via de novo pathway; L-homoserine from L-aspartate: step 2/3. Its pathway is amino-acid biosynthesis; L-threonine biosynthesis; L-threonine from L-aspartate: step 2/5. Functionally, catalyzes the NADPH-dependent formation of L-aspartate-semialdehyde (L-ASA) by the reductive dephosphorylation of L-aspartyl-4-phosphate. The chain is Aspartate-semialdehyde dehydrogenase from Rickettsia conorii (strain ATCC VR-613 / Malish 7).